The chain runs to 357 residues: Enoyl-[acyl-carrier-protein] reductase, mitochondrial (357 aa).

The N-terminal 19 residues, 1–19 (MLRRGFLSRINAAQWSRQM), are a transit peptide targeting the mitochondrion. In terms of domain architecture, Enoyl reductase (ER) spans 36–352 (EVLQLVEDKL…FKGFTGKKYI (317 aa)). Y74 functions as the Proton donor in the catalytic mechanism. Residues N147, 173-176 (NSAV), 196-198 (RDR), 264-267 (YGGM), 289-291 (FWM), K349, and K350 each bind NADP(+).

This sequence belongs to the zinc-containing alcohol dehydrogenase family. Quinone oxidoreductase subfamily. Homodimer. Expressed in the central nervous system.

The protein localises to the mitochondrion. The enzyme catalyses a 2,3-saturated acyl-[ACP] + NADP(+) = a (2E)-enoyl-[ACP] + NADPH + H(+). In terms of biological role, catalyzes the NADPH-dependent reduction of trans-2-enoyl thioesters in mitochondrial fatty acid synthesis (fatty acid synthesis type II). Fatty acid chain elongation in mitochondria uses acyl carrier protein (ACP) as an acyl group carrier, but the enzyme accepts both ACP and CoA thioesters as substrates in vitro. Involved in iron homeostasis; affecting Fe-S cluster assembly and ceramide metabolism. Required for proper morphology and bioenergetic functions of mitochondria. Required for maintenance of neurons, including photoreceptor neurons. In Drosophila melanogaster (Fruit fly), this protein is Enoyl-[acyl-carrier-protein] reductase, mitochondrial.